The sequence spans 504 residues: ATP synthase subunit beta (504 aa).

181–188 is a binding site for ATP; that stretch reads GGAGVGKT.

The protein belongs to the ATPase alpha/beta chains family. F-type ATPases have 2 components, CF(1) - the catalytic core - and CF(0) - the membrane proton channel. CF(1) has five subunits: alpha(3), beta(3), gamma(1), delta(1), epsilon(1). CF(0) has three main subunits: a(1), b(2) and c(9-12). The alpha and beta chains form an alternating ring which encloses part of the gamma chain. CF(1) is attached to CF(0) by a central stalk formed by the gamma and epsilon chains, while a peripheral stalk is formed by the delta and b chains.

The protein resides in the cell inner membrane. It catalyses the reaction ATP + H2O + 4 H(+)(in) = ADP + phosphate + 5 H(+)(out). Its function is as follows. Produces ATP from ADP in the presence of a proton gradient across the membrane. The catalytic sites are hosted primarily by the beta subunits. This Ehrlichia ruminantium (strain Gardel) protein is ATP synthase subunit beta.